Here is a 157-residue protein sequence, read N- to C-terminus: Probable succinate transporter subunit YjjB (157 aa).

Transmembrane regions (helical) follow at residues 8 to 28, 34 to 54, 55 to 75, 87 to 107, and 129 to 149; these read LALM…AMVF, ALPW…LMMS, AGFN…SIGI, VFTV…TAMI, and FLKA…PGLW.

Belongs to the ThrE exporter (TC 2.A.79) family. As to quaternary structure, the transporter is composed of YjjB and YjjP.

It localises to the cell inner membrane. In terms of biological role, involved in succinate export with YjjP. Both proteins are required for export. The polypeptide is Probable succinate transporter subunit YjjB (Salmonella typhi).